Here is a 64-residue protein sequence, read N- to C-terminus: Translation machinery-associated protein 7 homolog (64 aa).

Residues 1 to 64 are disordered; sequence MSGRQGGKAK…GGGIKKSGKK (64 aa). Residues 21–50 adopt a coiled-coil conformation; it reads DLSEEDVEFKKKQQEEAKKIKEMAAKAGQR. Residues 28–44 are compositionally biased toward basic and acidic residues; it reads EFKKKQQEEAKKIKEMA. The span at 53–64 shows a compositional bias: gly residues; sequence LLGGGIKKSGKK.

The protein belongs to the TMA7 family.

The polypeptide is Translation machinery-associated protein 7 homolog (Caenorhabditis elegans).